Reading from the N-terminus, the 332-residue chain is MISFSSFYQQIADSNLQHWLETLPSILGKWQRDHKHGNLPKWEKVLNKLHYPAPDQVDFVDSVTVGSGEQLSPGEKEKLENLLRLFMPWRKGPFHIHGIHIDTEWRSDWKWDRVKQHISPLNNRTVLDVGCGSGYHMWRMLGAGAKRVVGIDPSPLFLCQFEAVKRLAGAHHPVHLLPLGIEELPPLDAFDTVFSMGVLYHRRSPIDHLLQLRDQLRTGGELVLETLVIDGDENAVLVPQDRYGKMNNVWFIPSVAALMLWLKKCDFTDIRCVDTDVTALAEQRRTDWMPNESLLEYLDPTDITKTIEGYPAPKRATIIAIKNQPNQETVNG.

Carboxy-S-adenosyl-L-methionine is bound by residues lysine 91, tryptophan 105, lysine 110, glycine 130, 152–154, 181–182, methionine 196, tyrosine 200, and arginine 315; these read DPS and IE.

It belongs to the class I-like SAM-binding methyltransferase superfamily. CmoB family. In terms of assembly, homotetramer.

The enzyme catalyses carboxy-S-adenosyl-L-methionine + 5-hydroxyuridine(34) in tRNA = 5-carboxymethoxyuridine(34) in tRNA + S-adenosyl-L-homocysteine + H(+). Catalyzes carboxymethyl transfer from carboxy-S-adenosyl-L-methionine (Cx-SAM) to 5-hydroxyuridine (ho5U) to form 5-carboxymethoxyuridine (cmo5U) at position 34 in tRNAs. This chain is tRNA U34 carboxymethyltransferase, found in Shewanella sp. (strain W3-18-1).